A 257-amino-acid polypeptide reads, in one-letter code: Global transcriptional regulator CodY (257 aa).

The segment at 1 to 155 (MSLLSKTREL…AATVIGMEIL (155 aa)) is GAF domain. Residues 203–222 (ASKVADGVGITRSVIVNALR) constitute a DNA-binding region (H-T-H motif).

The protein belongs to the CodY family.

Its subcellular location is the cytoplasm. In terms of biological role, DNA-binding global transcriptional regulator which is involved in the adaptive response to starvation and acts by directly or indirectly controlling the expression of numerous genes in response to nutrient availability. During rapid exponential growth, CodY is highly active and represses genes whose products allow adaptation to nutrient depletion. In Staphylococcus aureus (strain bovine RF122 / ET3-1), this protein is Global transcriptional regulator CodY.